We begin with the raw amino-acid sequence, 715 residues long: 1,4-alpha-glucan branching enzyme GlgB (715 aa).

Residue D396 is the Nucleophile of the active site. E449 acts as the Proton donor in catalysis.

It belongs to the glycosyl hydrolase 13 family. GlgB subfamily. In terms of assembly, monomer.

The enzyme catalyses Transfers a segment of a (1-&gt;4)-alpha-D-glucan chain to a primary hydroxy group in a similar glucan chain.. It participates in glycan biosynthesis; glycogen biosynthesis. Functionally, catalyzes the formation of the alpha-1,6-glucosidic linkages in glycogen by scission of a 1,4-alpha-linked oligosaccharide from growing alpha-1,4-glucan chains and the subsequent attachment of the oligosaccharide to the alpha-1,6 position. This Aliivibrio fischeri (strain ATCC 700601 / ES114) (Vibrio fischeri) protein is 1,4-alpha-glucan branching enzyme GlgB.